We begin with the raw amino-acid sequence, 90 residues long: Putative membrane protein insertion efficiency factor (90 aa).

It belongs to the UPF0161 family.

It localises to the cell inner membrane. In terms of biological role, could be involved in insertion of integral membrane proteins into the membrane. In Bordetella bronchiseptica (strain ATCC BAA-588 / NCTC 13252 / RB50) (Alcaligenes bronchisepticus), this protein is Putative membrane protein insertion efficiency factor.